The primary structure comprises 473 residues: GTPase Der (473 aa).

EngA-type G domains are found at residues 3–167 (FTVA…GKDR) and 203–378 (LRVA…RVWN). GTP-binding positions include 9–16 (GRPNVGKS), 56–60 (DTAGL), 119–122 (NKSE), 209–216 (GRPNAGKS), 256–260 (DTAGM), and 321–324 (NKWD). Residues 379–463 (KRISTAKLNR…PIRIHFRSAE (85 aa)) enclose the KH-like domain.

Belongs to the TRAFAC class TrmE-Era-EngA-EngB-Septin-like GTPase superfamily. EngA (Der) GTPase family. Associates with the 50S ribosomal subunit.

In terms of biological role, GTPase that plays an essential role in the late steps of ribosome biogenesis. In Rhizobium leguminosarum bv. trifolii (strain WSM2304), this protein is GTPase Der.